Reading from the N-terminus, the 371-residue chain is 4-hydroxy-3-methylbut-2-en-1-yl diphosphate synthase (flavodoxin) (371 aa).

Residues C270, C273, C305, and E312 each coordinate [4Fe-4S] cluster.

It belongs to the IspG family. [4Fe-4S] cluster serves as cofactor.

The enzyme catalyses (2E)-4-hydroxy-3-methylbut-2-enyl diphosphate + oxidized [flavodoxin] + H2O + 2 H(+) = 2-C-methyl-D-erythritol 2,4-cyclic diphosphate + reduced [flavodoxin]. Its pathway is isoprenoid biosynthesis; isopentenyl diphosphate biosynthesis via DXP pathway; isopentenyl diphosphate from 1-deoxy-D-xylulose 5-phosphate: step 5/6. Converts 2C-methyl-D-erythritol 2,4-cyclodiphosphate (ME-2,4cPP) into 1-hydroxy-2-methyl-2-(E)-butenyl 4-diphosphate. In Shewanella sediminis (strain HAW-EB3), this protein is 4-hydroxy-3-methylbut-2-en-1-yl diphosphate synthase (flavodoxin).